The sequence spans 93 residues: Phosphoribosyl-ATP pyrophosphatase (93 aa).

This sequence belongs to the PRA-PH family.

It localises to the cytoplasm. The enzyme catalyses 1-(5-phospho-beta-D-ribosyl)-ATP + H2O = 1-(5-phospho-beta-D-ribosyl)-5'-AMP + diphosphate + H(+). It functions in the pathway amino-acid biosynthesis; L-histidine biosynthesis; L-histidine from 5-phospho-alpha-D-ribose 1-diphosphate: step 2/9. This Mycobacterium bovis (strain ATCC BAA-935 / AF2122/97) protein is Phosphoribosyl-ATP pyrophosphatase (hisE).